Reading from the N-terminus, the 163-residue chain is Nucleotide-binding protein CYB_0891 (163 aa).

This sequence belongs to the YajQ family.

Nucleotide-binding protein. The chain is Nucleotide-binding protein CYB_0891 from Synechococcus sp. (strain JA-2-3B'a(2-13)) (Cyanobacteria bacterium Yellowstone B-Prime).